Consider the following 412-residue polypeptide: Tyrosine--tRNA ligase 1 (412 aa).

Residue tyrosine 41 participates in L-tyrosine binding. Positions 46 to 55 (ATADSLHVGH) match the 'HIGH' region motif. L-tyrosine contacts are provided by tyrosine 174 and glutamine 178. Positions 234–238 (KMGKS) match the 'KMSKS' region motif. An ATP-binding site is contributed by lysine 237. The S4 RNA-binding domain occupies 348–411 (LSLTDLLLEH…KKQHLHLRLE (64 aa)).

It belongs to the class-I aminoacyl-tRNA synthetase family. TyrS type 1 subfamily. Homodimer.

Its subcellular location is the cytoplasm. The catalysed reaction is tRNA(Tyr) + L-tyrosine + ATP = L-tyrosyl-tRNA(Tyr) + AMP + diphosphate + H(+). Its function is as follows. Catalyzes the attachment of tyrosine to tRNA(Tyr) in a two-step reaction: tyrosine is first activated by ATP to form Tyr-AMP and then transferred to the acceptor end of tRNA(Tyr). The polypeptide is Tyrosine--tRNA ligase 1 (Pseudomonas aeruginosa (strain ATCC 15692 / DSM 22644 / CIP 104116 / JCM 14847 / LMG 12228 / 1C / PRS 101 / PAO1)).